The sequence spans 549 residues: MAKFVFITGGVVSSIGKGIVAASLGRLLKSRGYNVSILKLDPYLNVDPGTMSPFQHGEVFVTEDGAETDLDLGHYERFTDTAMSRLNSVTTGSIYQSVINKERRGAYNGGTVQVIPHITGEIRERIHRVAANSGADVVITEIGGTVGDIESLPFLEAIREFRGDVGRQDLAYIHVTLLPFIGTSGELKTKPTQHSVKELRSIGIQPDVLVCRSDREISEDLKRKIGGFCGVPNRAVIPSLDADTIYAVPLTLEEGGLCREVLDVLQLTDHESDMTAWSQLVHNLRNPGPSVKVALVGKYVQLNDAYLSVVEALRHACIAQDASLDLHWVCAEQIETEGADALLRGMDAVVVPGGFGNRGVDGKIAAIRWAREQRVPFLGLCLGMQTAVIEWARNQAGLPEATSEELDPGTPHPVIHLLPEQQDVVDLGGTMRLGVYPCRIAPDTLADRLYGEQVVYERHRHRFEFNNAYRSLFLEAGYVVSGTSPDGRLVELIELKGHPFFTACQYHPEFLSRPGRPHPLFRGLIEAAQQRLPDSPAQAIRNQGEVTTP.

Residues 1-267 form an amidoligase domain region; it reads MAKFVFITGG…CREVLDVLQL (267 aa). CTP is bound at residue serine 13. Serine 13 contacts UTP. ATP-binding positions include 14–19 and aspartate 71; that span reads SIGKGI. Mg(2+) contacts are provided by aspartate 71 and glutamate 141. CTP-binding positions include 148–150, 188–193, and lysine 224; these read DIE and KTKPTQ. UTP is bound by residues 188-193 and lysine 224; that span reads KTKPTQ. In terms of domain architecture, Glutamine amidotransferase type-1 spans 292–534; sequence KVALVGKYVQ…IEAAQQRLPD (243 aa). Glycine 354 contributes to the L-glutamine binding site. Cysteine 381 functions as the Nucleophile; for glutamine hydrolysis in the catalytic mechanism. L-glutamine is bound by residues 382-385, glutamate 405, and arginine 462; that span reads LGMQ. Active-site residues include histidine 507 and glutamate 509.

Belongs to the CTP synthase family. As to quaternary structure, homotetramer.

The catalysed reaction is UTP + L-glutamine + ATP + H2O = CTP + L-glutamate + ADP + phosphate + 2 H(+). It catalyses the reaction L-glutamine + H2O = L-glutamate + NH4(+). It carries out the reaction UTP + NH4(+) + ATP = CTP + ADP + phosphate + 2 H(+). It participates in pyrimidine metabolism; CTP biosynthesis via de novo pathway; CTP from UDP: step 2/2. Allosterically activated by GTP, when glutamine is the substrate; GTP has no effect on the reaction when ammonia is the substrate. The allosteric effector GTP functions by stabilizing the protein conformation that binds the tetrahedral intermediate(s) formed during glutamine hydrolysis. Inhibited by the product CTP, via allosteric rather than competitive inhibition. Functionally, catalyzes the ATP-dependent amination of UTP to CTP with either L-glutamine or ammonia as the source of nitrogen. Regulates intracellular CTP levels through interactions with the four ribonucleotide triphosphates. The sequence is that of CTP synthase from Synechococcus sp. (strain CC9902).